The following is a 129-amino-acid chain: Large ribosomal subunit protein bL12 (129 aa).

This sequence belongs to the bacterial ribosomal protein bL12 family. Homodimer. Part of the ribosomal stalk of the 50S ribosomal subunit. Forms a multimeric L10(L12)X complex, where L10 forms an elongated spine to which 2 to 4 L12 dimers bind in a sequential fashion. Binds GTP-bound translation factors.

Forms part of the ribosomal stalk which helps the ribosome interact with GTP-bound translation factors. Is thus essential for accurate translation. This is Large ribosomal subunit protein bL12 from Treponema pallidum (strain Nichols).